We begin with the raw amino-acid sequence, 652 residues long: Threonine--tRNA ligase (652 aa).

Residues 1-61 (MIKLKLPDGS…DRDAEVEIVT (61 aa)) enclose the TGS domain. Positions 243–548 (DHRKIGREMD…LIENYEGRFP (306 aa)) are catalytic. 3 residues coordinate Zn(2+): cysteine 348, histidine 399, and histidine 525.

The protein belongs to the class-II aminoacyl-tRNA synthetase family. Homodimer. Zn(2+) is required as a cofactor.

It localises to the cytoplasm. It carries out the reaction tRNA(Thr) + L-threonine + ATP = L-threonyl-tRNA(Thr) + AMP + diphosphate + H(+). In terms of biological role, catalyzes the attachment of threonine to tRNA(Thr) in a two-step reaction: L-threonine is first activated by ATP to form Thr-AMP and then transferred to the acceptor end of tRNA(Thr). Also edits incorrectly charged L-seryl-tRNA(Thr). The chain is Threonine--tRNA ligase from Parvibaculum lavamentivorans (strain DS-1 / DSM 13023 / NCIMB 13966).